A 789-amino-acid polypeptide reads, in one-letter code: Isoamylase SU1, chloroplastic (789 aa).

The transit peptide at 1-44 directs the protein to the chloroplast; the sequence is MAQQLPCVSSPRPLLAVPAGRWRAGVRGRPNVAGLGRGRLSLHA. Asp-417 serves as the catalytic Nucleophile. Glu-473 serves as the catalytic Proton donor.

The protein belongs to the glycosyl hydrolase 13 family.

It is found in the plastid. It localises to the chloroplast. It carries out the reaction Hydrolysis of (1-&gt;6)-alpha-D-glucosidic branch linkages in glycogen, amylopectin and their beta-limit dextrins.. The protein operates within glycan biosynthesis; starch biosynthesis. Functionally, isoamylase starch-debranching enzyme involved in amylopectin biosynthesis in endosperm. Functions by removing excess branches or improper branches that interfere with the formation of double helices of the cluster chains of amylopectin and crystallization of starch. This is Isoamylase SU1, chloroplastic from Zea mays (Maize).